A 129-amino-acid polypeptide reads, in one-letter code: C-type natriuretic peptide 1 (129 aa).

A signal peptide spans 1–24 (MSYKRGTCLGFIMLLMVSHHHTKG). Residues 25–107 (KPLSSLQNLS…SRRYRQRNKK (83 aa)) constitute a propeptide that is removed on maturation. A disulfide bridge connects residues C113 and C129.

The protein belongs to the natriuretic peptide family.

The protein resides in the secreted. Functionally, hormone which plays a role in endochondral ossification through regulation of cartilaginous growth plate chondrocytes proliferation and differentiation. May also be vasoactive and natriuretic. May be important for freshwater adaptation. In Aquarana catesbeiana (American bullfrog), this protein is C-type natriuretic peptide 1.